The sequence spans 221 residues: 7-cyano-7-deazaguanine synthase (221 aa).

9–19 (YSGGMDSFTLL) lines the ATP pocket. Zn(2+)-binding residues include cysteine 185, cysteine 193, cysteine 196, and cysteine 199.

Belongs to the QueC family. Zn(2+) is required as a cofactor.

The enzyme catalyses 7-carboxy-7-deazaguanine + NH4(+) + ATP = 7-cyano-7-deazaguanine + ADP + phosphate + H2O + H(+). It functions in the pathway purine metabolism; 7-cyano-7-deazaguanine biosynthesis. Functionally, catalyzes the ATP-dependent conversion of 7-carboxy-7-deazaguanine (CDG) to 7-cyano-7-deazaguanine (preQ(0)). This Marinobacter nauticus (strain ATCC 700491 / DSM 11845 / VT8) (Marinobacter aquaeolei) protein is 7-cyano-7-deazaguanine synthase.